The following is a 566-amino-acid chain: Beta-1,4 N-acetylgalactosaminyltransferase 2 (566 aa).

Positions 1–22 (MGSAGFSVGKFHVEVASRGREC) are ER exit and post-Golgi subcellular localization. Topologically, residues 1–67 (MGSAGFSVGK…HGRSRRQGSR (67 aa)) are cytoplasmic. The Vesicular targeting motif lies at 9 to 15 (GKFHVEV). The helical; Signal-anchor for type II membrane protein transmembrane segment at 68–88 (FLWLLKILVIILVLGIVGFMF) threads the bilayer. Residues 89-566 (GSMFLQAVFS…YFKNHLQCAA (478 aa)) lie on the Lumenal side of the membrane.

This sequence belongs to the glycosyltransferase 2 family. Homodimer; disulfide-linked. Widely expressed. Highly expressed in colon and to a lesser extent in kidney, stomach, ileum and rectum.

Its subcellular location is the golgi apparatus. It localises to the trans-Golgi network membrane. The protein localises to the cytoplasmic vesicle membrane. The enzyme catalyses an N-acetyl-alpha-neuraminyl-(2-&gt;3)-beta-D-galactosyl derivative + UDP-N-acetyl-alpha-D-galactosamine = an N-acetyl-beta-D-galactosaminyl-(1-&gt;4)-[N-acetyl-alpha-neuraminyl-(2-&gt;3)]-beta-D-galactosyl derivative + UDP + H(+). The catalysed reaction is a 3-O-{alpha-Neu5Ac-(2-&gt;3)-beta-D-Gal-(1-&gt;3)-[alpha-Neu5Ac-(2-&gt;6)]-alpha-D-GalNAc}-L-seryl-[protein] + UDP-N-acetyl-alpha-D-galactosamine = a 3-O-{[alpha-Neu5Ac-(2-&gt;3)]-beta-D-GalNAc-(1-&gt;4)-beta-D-Gal-(1-&gt;3)-[alpha-Neu5Ac-(2-&gt;6)]-alpha-D-GalNAc}-L-seryl-[protein] + UDP + H(+). It catalyses the reaction a 3-O-{alpha-Neu5Ac-(2-&gt;3)-beta-D-Gal-(1-&gt;3)-[alpha-Neu5Ac-(2-&gt;6)]-alpha-D-GalNAc}-L-threonyl-[protein] + UDP-N-acetyl-alpha-D-galactosamine = a 3-O-{[alpha-Neu5Ac-(2-&gt;3)]-beta-D-GalNAc-(1-&gt;4)-beta-D-Gal-(1-&gt;3)-[alpha-Neu5Ac-(2-&gt;6)]-alpha-D-GalNAc}-L-threonyl-[protein] + UDP + H(+). It carries out the reaction a neolactoside IV(3)-alpha-NeuAc-nLc4Cer + UDP-N-acetyl-alpha-D-galactosamine = a neolactoside IV(4)-GalNAc,IV(3)-alpha-NeuAc-nLc4Cer + UDP + H(+). The protein operates within protein modification; protein glycosylation. It functions in the pathway glycolipid biosynthesis. Its function is as follows. Beta-1,4 N-acetylgalactosaminyltransferase involved in the biosynthesis of Sd(a) histo-blood group antigen. Catalyzes the transfer of N-acetylgalactosamine (GalNAc) group in a beta-1,4-linkage from UDP-GalNAc to the galactose residue of NeuAcalpha2-&gt;3Gal-R to form Sd(a) glycan epitope GalNAcbeta1-&gt;4(NeuAcalpha2-&gt;3)Gal-R. The Sd(a) epitope is carried in O- and N-linked glycoproteins and glycolipids, including O-linked core 1 structures on GYPA/glycophorin, SLC4A1 and SLC29A1 in erythrocytes, N-linked glycans attached to the Tamm-Horsfall glycoprotein UMOD/uromodulin in renal fluids, O-linked core 3 glycans on mucins in colon and neolactosides in gastric mucosa. Confers protection against influenza A virus strains that attach to NeuAcalpha2-&gt;3-carrying host receptors. Modifies N-glycan chains on host receptors and prevents virus entry into cells. The chain is Beta-1,4 N-acetylgalactosaminyltransferase 2 from Homo sapiens (Human).